Here is a 357-residue protein sequence, read N- to C-terminus: Hyaluronidase (357 aa).

The signal sequence occupies residues 1–26; that stretch reads MLLVTLFLFFLQALVNGDSCGSNCEK. Cystine bridges form between Cys-45/Cys-334 and Cys-211/Cys-223. Residues Asn-105 and Asn-125 are each glycosylated (N-linked (GlcNAc...) asparagine). Glu-135 serves as the catalytic Proton donor. Asn-153 carries N-linked (GlcNAc...) asparagine glycosylation. Asn-351 is a glycosylation site (N-linked (GlcNAc...) asparagine).

Belongs to the glycosyl hydrolase 56 family.

The protein resides in the secreted. The catalysed reaction is Random hydrolysis of (1-&gt;4)-linkages between N-acetyl-beta-D-glucosamine and D-glucuronate residues in hyaluronate.. Hydrolyzes high molecular weight hyaluronic acid to produce small oligosaccharides. This chain is Hyaluronidase, found in Vespa magnifica (Hornet).